Consider the following 194-residue polypeptide: ATP-dependent Clp protease proteolytic subunit (194 aa).

Residue Ser98 is the Nucleophile of the active site. The active site involves His123.

It belongs to the peptidase S14 family. In terms of assembly, fourteen ClpP subunits assemble into 2 heptameric rings which stack back to back to give a disk-like structure with a central cavity, resembling the structure of eukaryotic proteasomes.

The protein resides in the cytoplasm. The enzyme catalyses Hydrolysis of proteins to small peptides in the presence of ATP and magnesium. alpha-casein is the usual test substrate. In the absence of ATP, only oligopeptides shorter than five residues are hydrolyzed (such as succinyl-Leu-Tyr-|-NHMec, and Leu-Tyr-Leu-|-Tyr-Trp, in which cleavage of the -Tyr-|-Leu- and -Tyr-|-Trp bonds also occurs).. Cleaves peptides in various proteins in a process that requires ATP hydrolysis. Has a chymotrypsin-like activity. Plays a major role in the degradation of misfolded proteins. The polypeptide is ATP-dependent Clp protease proteolytic subunit (Staphylococcus carnosus (strain TM300)).